Reading from the N-terminus, the 212-residue chain is Ribonuclease HII (212 aa).

Positions Ala17–Gln211 constitute an RNase H type-2 domain. Residues Asp23, Glu24, and Asp120 each contribute to the a divalent metal cation site.

The protein belongs to the RNase HII family. Requires Mn(2+) as cofactor. The cofactor is Mg(2+).

The protein resides in the cytoplasm. It catalyses the reaction Endonucleolytic cleavage to 5'-phosphomonoester.. In terms of biological role, endonuclease that specifically degrades the RNA of RNA-DNA hybrids. In Chloroflexus aurantiacus (strain ATCC 29364 / DSM 637 / Y-400-fl), this protein is Ribonuclease HII.